We begin with the raw amino-acid sequence, 75 residues long: Large ribosomal subunit protein uL29 (75 aa).

It belongs to the universal ribosomal protein uL29 family.

The chain is Large ribosomal subunit protein uL29 from Ureaplasma urealyticum serovar 10 (strain ATCC 33699 / Western).